A 155-amino-acid chain; its full sequence is Phospholipase A2 A2-actitoxin-Ucs2a (155 aa).

A signal peptide spans 1 to 19 (MKNNIILVILLGISVFVDC). A propeptide spanning residues 20–42 (LPLNDQEEDKSLNAQESEVSAVQ) is cleaved from the precursor. 6 cysteine pairs are disulfide-bonded: C55–C118, C71–C87, C86–C143, C93–C136, C100–C129, and C122–C134. Ca(2+) contacts are provided by G72 and G74. H90 is an active-site residue. D91 provides a ligand contact to Ca(2+). Residue D137 is part of the active site.

Belongs to the phospholipase A2 family. It depends on Ca(2+) as a cofactor.

Its subcellular location is the secreted. It is found in the nematocyst. The catalysed reaction is a 1,2-diacyl-sn-glycero-3-phosphocholine + H2O = a 1-acyl-sn-glycero-3-phosphocholine + a fatty acid + H(+). Functionally, PLA2 catalyzes the calcium-dependent hydrolysis of the 2-acyl groups in 3-sn-phosphoglycerides. In Urticina crassicornis (Mottled anemone), this protein is Phospholipase A2 A2-actitoxin-Ucs2a.